We begin with the raw amino-acid sequence, 124 residues long: Small ribosomal subunit protein uS12 (124 aa).

3-methylthioaspartic acid is present on aspartate 89.

This sequence belongs to the universal ribosomal protein uS12 family. As to quaternary structure, part of the 30S ribosomal subunit. Contacts proteins S8 and S17. May interact with IF1 in the 30S initiation complex.

In terms of biological role, with S4 and S5 plays an important role in translational accuracy. Interacts with and stabilizes bases of the 16S rRNA that are involved in tRNA selection in the A site and with the mRNA backbone. Located at the interface of the 30S and 50S subunits, it traverses the body of the 30S subunit contacting proteins on the other side and probably holding the rRNA structure together. The combined cluster of proteins S8, S12 and S17 appears to hold together the shoulder and platform of the 30S subunit. This is Small ribosomal subunit protein uS12 from Koribacter versatilis (strain Ellin345).